Reading from the N-terminus, the 109-residue chain is Large ribosomal subunit protein uL22 (109 aa).

This sequence belongs to the universal ribosomal protein uL22 family. Part of the 50S ribosomal subunit.

Its function is as follows. This protein binds specifically to 23S rRNA; its binding is stimulated by other ribosomal proteins, e.g. L4, L17, and L20. It is important during the early stages of 50S assembly. It makes multiple contacts with different domains of the 23S rRNA in the assembled 50S subunit and ribosome. In terms of biological role, the globular domain of the protein is located near the polypeptide exit tunnel on the outside of the subunit, while an extended beta-hairpin is found that lines the wall of the exit tunnel in the center of the 70S ribosome. This chain is Large ribosomal subunit protein uL22, found in Cupriavidus metallidurans (strain ATCC 43123 / DSM 2839 / NBRC 102507 / CH34) (Ralstonia metallidurans).